The chain runs to 471 residues: Heat shock 70 kDa protein 13 (471 aa).

An N-terminal signal peptide occupies residues 1–22; it reads MAGEMTILGSAVLTLLLAGYLA. The disordered stretch occupies residues 315-337; that stretch reads ENDRKGPPTSDSELPKDKFSQAN.

This sequence belongs to the heat shock protein 70 family. Binds UBQLN2.

It is found in the microsome. Its subcellular location is the endoplasmic reticulum. Its function is as follows. Has peptide-independent ATPase activity. In Bos taurus (Bovine), this protein is Heat shock 70 kDa protein 13 (HSPA13).